Reading from the N-terminus, the 90-residue chain is Antitoxin epsilon 2 (90 aa).

Belongs to the epsilon antitoxin family. As to quaternary structure, in the presence of the zeta toxin, forms an inactive PezA(2)PezT(2) heterotetramer.

Its function is as follows. Antitoxin component of a type II toxin-antitoxin (TA) system. Neutralizes the toxic effect of zeta toxin. Part of a postsegregational killing (PSK) system involved in the killing of plasmid-free cells. Continuous synthesis of the epsilon antitoxin is required to counteract the zeta toxin. The polypeptide is Antitoxin epsilon 2 (Enterococcus faecalis (Streptococcus faecalis)).